The sequence spans 446 residues: MSDKRRYFGTDGVRGKVGQYPITPDFVLKLGWAAGRVLAKQGTRKVIIGKDTRISGYMLESALEAGLAAAGLKATFTGPMPTPAVAYLTQTFRAEAGIVISASHNPYYDNGIKFFSYEGTKLPDDIELAIEAELDKDIECVESAELGKASRMVDAAGRYIEFCKSTFPSKLSLSGLKLVVDCANGATYHIAPNVFRELGAEVIAMGVEPNGLNINDQVGATDVRALQKRVVEEHAHLGLAFDGDGDRIIMVDHLGNKVDGDQIAYIIARDALRRGELKGGVVGTLMTNLGMENGLKQLGIPFVRAAVGDRYVMEKLLEKGWKIGAENSGHVILLDKVTTGDAIVAGLQVLASVVGSEMTLHELAKGMTLYPQVLENVRFAGDNNPLEADAVKAAVSEVEAELGSKGRVLLRKSGTEPLIRVMVEGEDETLVKQSALKIAQAVKDNC.

Ser-103 (phosphoserine intermediate) is an active-site residue. Positions 103, 242, 244, and 246 each coordinate Mg(2+). Ser-103 carries the post-translational modification Phosphoserine.

This sequence belongs to the phosphohexose mutase family. Requires Mg(2+) as cofactor. Activated by phosphorylation.

The enzyme catalyses alpha-D-glucosamine 1-phosphate = D-glucosamine 6-phosphate. Catalyzes the conversion of glucosamine-6-phosphate to glucosamine-1-phosphate. This Vibrio cholerae serotype O1 (strain ATCC 39315 / El Tor Inaba N16961) protein is Phosphoglucosamine mutase.